The primary structure comprises 321 residues: GDP-L-fucose synthase (321 aa).

Position 14–20 (14–20 (GGSGLVG)) interacts with NADP(+). Tyr143 acts as the Proton donor/acceptor in catalysis. NADP(+)-binding positions include Lys147, 170-173 (PTNV), and His186. Residues Lys194, Trp208, Arg215, and Asp277 each contribute to the substrate site.

This sequence belongs to the NAD(P)-dependent epimerase/dehydratase family. Fucose synthase subfamily. Homodimer.

It catalyses the reaction GDP-beta-L-fucose + NADP(+) = GDP-4-dehydro-alpha-D-rhamnose + NADPH + H(+). Its pathway is nucleotide-sugar biosynthesis; GDP-L-fucose biosynthesis via de novo pathway; GDP-L-fucose from GDP-alpha-D-mannose: step 2/2. In terms of biological role, catalyzes the two-step NADP-dependent conversion of GDP-4-dehydro-6-deoxy-D-mannose to GDP-fucose, involving an epimerase and a reductase reaction. This Pongo abelii (Sumatran orangutan) protein is GDP-L-fucose synthase (GFUS).